The primary structure comprises 492 residues: Lysine--tRNA ligase (492 aa).

Residues Glu403 and Glu410 each coordinate Mg(2+).

It belongs to the class-II aminoacyl-tRNA synthetase family. Homodimer. Mg(2+) is required as a cofactor.

The protein resides in the cytoplasm. The enzyme catalyses tRNA(Lys) + L-lysine + ATP = L-lysyl-tRNA(Lys) + AMP + diphosphate. This chain is Lysine--tRNA ligase, found in Mycoplasmoides gallisepticum (strain R(low / passage 15 / clone 2)) (Mycoplasma gallisepticum).